We begin with the raw amino-acid sequence, 609 residues long: Phosphoenolpyruvate carboxykinase [GTP] (609 aa).

Residues Arg-81 and Tyr-220 to Gly-222 contribute to the substrate site. Mn(2+) contacts are provided by Lys-229 and His-249. A substrate-binding site is contributed by Ser-271. Ala-272–Asn-277 contributes to the GTP binding site. Cys-273 is an active-site residue. Residue Asp-296 coordinates Mn(2+). Asn-387–Arg-389 provides a ligand contact to substrate. GTP-binding positions include Arg-389, Arg-420, and Phe-515–Asn-518.

Belongs to the phosphoenolpyruvate carboxykinase [GTP] family. In terms of assembly, monomer. It depends on Mn(2+) as a cofactor.

The protein resides in the cytoplasm. It catalyses the reaction oxaloacetate + GTP = phosphoenolpyruvate + GDP + CO2. It functions in the pathway carbohydrate biosynthesis; gluconeogenesis. Catalyzes the conversion of oxaloacetate (OAA) to phosphoenolpyruvate (PEP), the rate-limiting step in the metabolic pathway that produces glucose from lactate and other precursors derived from the citric acid cycle. The chain is Phosphoenolpyruvate carboxykinase [GTP] from Mycobacterium ulcerans (strain Agy99).